Reading from the N-terminus, the 1009-residue chain is Protein WBSCR14 homolog (1009 aa).

Disordered stretches follow at residues 1–20, 304–354, 488–531, and 686–728; these read MSRG…PHDD, MSLG…LHQM, NNQP…DPMM, and ILES…EQEA. Composition is skewed to polar residues over residues 324-350 and 499-508; these read RTPT…SSAS and RSNLLPTQND. Residues 511–526 are compositionally biased toward low complexity; sequence LPQFLQSTQPTPQPQS. Residues 686–695 show a composition bias toward polar residues; that stretch reads ILESPSTSGD. Residues 803–856 form the bHLH domain; the sequence is RKRILHLHAEQNRRSALKDGFDQLMDIIPDLYSGGVKPTNAVVLAKSADHIRRL. The leucine-zipper stretch occupies residues 856-877; sequence LQAEKWDKTQKIDEAKAKIEKL.

Expressed in intestine, neurons, muscle, hypodermis, excretory cell and other tissues.

The protein localises to the nucleus. The protein resides in the cytoplasm. It localises to the mitochondrion. Functionally, transcription factor that binds to the E box motif 5'-CACGTG-3', probably in a heterodimeric complex with mxl-2. Involved in modulating longevity in response to TOR signaling, dietary restriction, the decline in protein homeostasis associated with normal aging, germline signaling and the insulin-like signaling pathway. Plays a role in autophagy. Involved in regulating migration of the ray 1 precursor cells in the male tail, acting in concert with Wnt and semaphorin signaling pathways. Regulates transcription of genes encoding extracellular matrix (ECM) components which may contribute to the substratum required for migration of the neighboring ray 1 precursor cells. Involved in repressing infection by the microsporidian pathogen N.parisii, probably acting independently of its canonical partner, mxl-2. The polypeptide is Protein WBSCR14 homolog (mml-1) (Caenorhabditis elegans).